A 250-amino-acid polypeptide reads, in one-letter code: Cell division protein ZapD (250 aa).

Belongs to the ZapD family. Interacts with FtsZ.

It localises to the cytoplasm. Its function is as follows. Cell division factor that enhances FtsZ-ring assembly. Directly interacts with FtsZ and promotes bundling of FtsZ protofilaments, with a reduction in FtsZ GTPase activity. The sequence is that of Cell division protein ZapD from Pectobacterium atrosepticum (strain SCRI 1043 / ATCC BAA-672) (Erwinia carotovora subsp. atroseptica).